The chain runs to 500 residues: L-arabinose isomerase (500 aa).

Mn(2+) contacts are provided by glutamate 306, glutamate 333, histidine 349, and histidine 448.

This sequence belongs to the arabinose isomerase family. The cofactor is Mn(2+).

The catalysed reaction is beta-L-arabinopyranose = L-ribulose. Its pathway is carbohydrate degradation; L-arabinose degradation via L-ribulose; D-xylulose 5-phosphate from L-arabinose (bacterial route): step 1/3. Its function is as follows. Catalyzes the conversion of L-arabinose to L-ribulose. This is L-arabinose isomerase from Koribacter versatilis (strain Ellin345).